A 325-amino-acid chain; its full sequence is MKTRNFSLVSALYVLLGVPLFVSAASYDDNEFSRKSRAYSELAEKTYDAGEYDVSAEYARLAEDFAQKSSVYIKETMARTTAEDAMNAARTRHAWAKNERIDRAYPTEYLLASEAIKTGGLAFDSKQYDVALTWARKALDALKNVKPESQLLAKAAKEEAARKAAEARKLEEQRIAAQKAQEERKRAEEEAARKAAEARKLEEQRIAAQKAQEERKRAEEEAARKAAEEAARKAEELEKGRVLPAQYKVTTWSIDRECFWNIAKNPAVYGNPFLWKKLYEANKDKIPQSKNPNWVEPETVLVIPSLKGEEREGLYEPNVKYRPLP.

Residues 1–24 (MKTRNFSLVSALYVLLGVPLFVSA) form the signal peptide. One copy of the EAARKAAE repeat lies at 159–166 (EAARKAAE). The stretch at 167 to 189 (ARKLEEQRIAAQKAQEERKRAEE) is one ARKLEEQRIAAQKAQEERKRAEE repeat. Positions 176 to 224 (AAQKAQEERKRAEEEAARKAAEARKLEEQRIAAQKAQEERKRAEEEAAR) are disordered. The EAARKAAE repeat unit spans residues 190 to 197 (EAARKAAE). The ARKLEEQRIAAQKAQEERKRAEE repeat unit spans residues 198-220 (ARKLEEQRIAAQKAQEERKRAEE). The stretch at 221-228 (EAARKAAE) is one EAARKAAE repeat. The stretch at 229 to 236 (EAARKAEE) is one EAARKAEE repeat.

This sequence to T.phagedenis TmpB.

The protein localises to the cell outer membrane. Functionally, tmp may serve as a porin or transport protein for large molecules. This Treponema pallidum (strain Nichols) protein is Treponemal membrane protein B (tmpB).